Consider the following 348-residue polypeptide: WD repeat-containing protein JIP5 (348 aa).

7 WD repeats span residues 5–44, 51–90, 94–132, 135–174, 179–218, 223–261, and 264–304; these read KLKNQPFDVAFHPKEPVVFSSLLTGQVCAWSYDDATGETS, PSKRTARALSIEENGDEIWMGGKSGSLFQLSTRDGSMTRE, AHECPINRVYCVNRNLVATGDDDGVIKLWDPRQADSIRT, QHFDYISDFTYFDDKRQLVATSGDGHLSVIDIRSNKSTPL, DQEDELLSIVPIKGGQKAIVGSGLGILSVWNRQMGWADSV, GHPASIDAIVALTPDIIATGSEDGMIRVIQVLPHKFLGV, and THEE…EDSD. Acidic residues predominate over residues 299–318; that stretch reads LFEDSDEDDEMEEDEPDSDE. Residues 299 to 348 form a disordered region; sequence LFEDSDEDDEMEEDEPDSDEEKSKKKKKDNGMKDMSRGQAENDGSFFADL.

This sequence belongs to the WD repeat WDR55 family.

Its subcellular location is the nucleus. It localises to the nucleolus. The protein is WD repeat-containing protein JIP5 (JIP5) of Cryptococcus neoformans var. neoformans serotype D (strain JEC21 / ATCC MYA-565) (Filobasidiella neoformans).